The sequence spans 296 residues: Uracil phosphoribosyltransferase, chloroplastic (296 aa).

Residues methionine 1–arginine 61 constitute a chloroplast transit peptide. Alanine 2 carries the N-acetylalanine modification. Arginine 148–isoleucine 151 contributes to the GTP binding site. 5-phospho-alpha-D-ribose 1-diphosphate is bound by residues arginine 158, arginine 183, aspartate 211, threonine 216–threonine 219, and aspartate 282. A uracil-binding site is contributed by glycine 281 to alanine 283.

This sequence belongs to the UPRTase family. The cofactor is Mg(2+).

The protein localises to the plastid. It localises to the chloroplast. It catalyses the reaction UMP + diphosphate = 5-phospho-alpha-D-ribose 1-diphosphate + uracil. The protein operates within pyrimidine metabolism; UMP biosynthesis via salvage pathway; UMP from uracil: step 1/1. Allosterically activated by GTP. Uracil phosphoribosyltransferase (UPRT) that catalyzes the conversion of uracil and 5-phospho-alpha-D-ribose 1-diphosphate (PRPP) to UMP and diphosphate. Is probably the only functional UPRT, since the dual-domain proteins of the UKL family seem to lack this activity. The sequence is that of Uracil phosphoribosyltransferase, chloroplastic (UPP) from Arabidopsis thaliana (Mouse-ear cress).